The sequence spans 278 residues: HTH-type transcriptional regulator HdfR (278 aa).

Residues 1–58 (MDTELLKTFLEVSRTRHFGRAAEALYLTQSAVSFRIRQLENQLGVNLFTRHRNNIRLT) form the HTH lysR-type domain. Residues 18–37 (FGRAAEALYLTQSAVSFRIR) constitute a DNA-binding region (H-T-H motif).

Belongs to the LysR transcriptional regulatory family.

In terms of biological role, negatively regulates the transcription of the flagellar master operon flhDC by binding to the upstream region of the operon. This is HTH-type transcriptional regulator HdfR from Salmonella agona (strain SL483).